Reading from the N-terminus, the 41-residue chain is MKVKNSLRSLKNRHRDCRVVRRKGRVYVINKTQRRFKARQG.

It belongs to the bacterial ribosomal protein bL36 family.

The polypeptide is Large ribosomal subunit protein bL36 (Jannaschia sp. (strain CCS1)).